A 271-amino-acid polypeptide reads, in one-letter code: Formamidopyrimidine-DNA glycosylase (271 aa).

P2 (schiff-base intermediate with DNA) is an active-site residue. Catalysis depends on E3, which acts as the Proton donor. K57 functions as the Proton donor; for beta-elimination activity in the catalytic mechanism. 3 residues coordinate DNA: H90, R109, and K150. The FPG-type zinc-finger motif lies at 235 to 269 (LVYGNKDKPCPKCGGKIESLIIGQRNSFFCPKCQK). R259 acts as the Proton donor; for delta-elimination activity in catalysis.

It belongs to the FPG family. Monomer. Requires Zn(2+) as cofactor.

The enzyme catalyses Hydrolysis of DNA containing ring-opened 7-methylguanine residues, releasing 2,6-diamino-4-hydroxy-5-(N-methyl)formamidopyrimidine.. It catalyses the reaction 2'-deoxyribonucleotide-(2'-deoxyribose 5'-phosphate)-2'-deoxyribonucleotide-DNA = a 3'-end 2'-deoxyribonucleotide-(2,3-dehydro-2,3-deoxyribose 5'-phosphate)-DNA + a 5'-end 5'-phospho-2'-deoxyribonucleoside-DNA + H(+). In terms of biological role, involved in base excision repair of DNA damaged by oxidation or by mutagenic agents. Acts as a DNA glycosylase that recognizes and removes damaged bases. Has a preference for oxidized purines, such as 7,8-dihydro-8-oxoguanine (8-oxoG). Has AP (apurinic/apyrimidinic) lyase activity and introduces nicks in the DNA strand. Cleaves the DNA backbone by beta-delta elimination to generate a single-strand break at the site of the removed base with both 3'- and 5'-phosphates. The sequence is that of Formamidopyrimidine-DNA glycosylase from Haemophilus influenzae (strain PittEE).